Here is a 328-residue protein sequence, read N- to C-terminus: Nucleotide-binding protein BLD_0430 (328 aa).

The tract at residues 1–35 (MNQQTTNRDTGEAAATNAPANSATSTSTPDNQPTP) is disordered. A compositionally biased stretch (low complexity) spans 13–29 (AAATNAPANSATSTSTP). 46 to 53 (GMSGAGRS) provides a ligand contact to ATP. GTP is bound at residue 101 to 104 (DVRS).

Belongs to the RapZ-like family.

Its function is as follows. Displays ATPase and GTPase activities. The protein is Nucleotide-binding protein BLD_0430 of Bifidobacterium longum (strain DJO10A).